Consider the following 217-residue polypeptide: RING-H2 finger protein ATL70 (217 aa).

The chain crosses the membrane as a helical span at residues 61–81 (IGGFRYGIGVSIGVLLLITTI). The segment at 147-189 (CAICLGDYKGKHLLRQLPDCNHLFHLKCIDTWLRLNPTCPVCR) adopts an RING-type; atypical zinc-finger fold.

Belongs to the RING-type zinc finger family. ATL subfamily.

The protein resides in the membrane. It catalyses the reaction S-ubiquitinyl-[E2 ubiquitin-conjugating enzyme]-L-cysteine + [acceptor protein]-L-lysine = [E2 ubiquitin-conjugating enzyme]-L-cysteine + N(6)-ubiquitinyl-[acceptor protein]-L-lysine.. It functions in the pathway protein modification; protein ubiquitination. The protein is RING-H2 finger protein ATL70 (ATL70) of Arabidopsis thaliana (Mouse-ear cress).